The sequence spans 180 residues: Homeobox protein ceh-12 (180 aa).

Residues 15-37 (SSQNEDQKLESHPSPPSQIPNYS) are disordered. Positions 110 to 169 (MRRPRTAFSSEQLVQLEKQFSDNRYLSRPRRYQLAQQLSLSETQIKIWFQNRRMKNKRCP) form a DNA-binding region, homeobox.

Expressed in VB motor neurons in the ventral nerve cord.

The protein resides in the nucleus. Its function is as follows. Transcription factor. Plays a role, downstream from homeobox protein unc-4 and Wnt signaling, in specifying synaptic inputs to A-class motor neurons. Involved in patterning of the synaptic outputs of the postmitotic DA class cholinergic motor neurons. The sequence is that of Homeobox protein ceh-12 (ceh-12) from Caenorhabditis elegans.